Here is a 124-residue protein sequence, read N- to C-terminus: UPF0375 protein Y45F10C.4 (124 aa).

An N-terminal signal peptide occupies residues 1–23; it reads MNFLPSTVLLLSFVVAIISGSFS. N-linked (GlcNAc...) asparagine glycans are attached at residues N36 and N62.

The protein belongs to the UPF0375 family.

It localises to the secreted. In Caenorhabditis elegans, this protein is UPF0375 protein Y45F10C.4.